The sequence spans 479 residues: Cruciferin PGCRURSE5 (479 aa).

The first 23 residues, 1–23 (MVKLAHLLVATFGVLLVLNGCLA), serve as a signal peptide directing secretion. Disulfide bonds link cysteine 37–cysteine 70 and cysteine 113–cysteine 296. One can recognise a Cupin type-1 1 domain in the interval 42–241 (LDVLQPTETI…ALKMQLRLAQ (200 aa)). At threonine 116 the chain carries Phosphothreonine. 3 disordered regions span residues 117–144 (FMDS…GFRD), 196–219 (RTFR…QQQN), and 271–291 (YESE…DNGL). The span at 124–141 (QGQGQQGQQGQQGQQQQG) shows a compositional bias: low complexity. The region spanning 302 to 451 (ENIDDPARAD…AFQISLEEAR (150 aa)) is the Cupin type-1 2 domain. Phosphothreonine occurs at positions 415 and 440.

Belongs to the 11S seed storage protein (globulins) family. Hexamer; each subunit is composed of an acidic and a basic chain derived from a single precursor and linked by a disulfide bond.

Its function is as follows. This is a seed storage protein. This Raphanus sativus (Radish) protein is Cruciferin PGCRURSE5 (CRURS).